A 767-amino-acid chain; its full sequence is MSGDHLHNDSQIEADFRLNDSHKHKDKHKDREHRHKEHKKDKEKDREKSKHSNSEHKDSEKKHKEKEKTKHKDGSSEKHKDKHKDRDKEKRKEEKVRASGDAKIKKEKENGFSSPPQIKDEPEDDGYFVPPKEDIKPLKRPRDEDDADYKPKKIKTEDIKKEKKRKLEEEEDGKLRKPKNKDKDKKVPEPDNKKKKPKKEEEQKWKWWEEERYPEGIKWKFLEHKGPVFAPPYEPLPDSVKFYYDGKVMKLSPKAEEVATFFAKMLDHEYTTKEIFRKNFFKDWRKEMTNEEKNIITNLSKCDFTQMSQYFKAQTEARKQMSKEEKLKIKEENEKLLKEYGFCIMDNHKERIANFKIEPPGLFRGRGNHPKMGMLKRRIMPEDIIINCSKDAKVPSPPPGHKWKEVRHDNKVTWLVSWTENIQGSIKYIMLNPSSRIKGEKDWQKYETARRLKKCVDKIRNQYREDWKSKEMKVRQRAVALYFIDKLALRAGNEKEEGETADTVGCCSLRVEHINLHPELDGQEYVVEFDFLGKDSIRYYNKVPVEKRVFKNLQLFMENKQPEDDLFDRLNTGILNKHLQDLMEGLTAKVFRTYNASITLQQQLKELTAPDENIPAKILSYNRANRAVAILCNHQRAPPKTFEKSMMNLQSKIDAKKEQLADARRDLKSAKADAKVMKDAKTKKVVESKKKAVQRLEEQLMKLEVQATDREENKQIALGTSKLNYLDPRITVAWCKKWGVPIEKIYNKTQREKFAWAIDMADEDYEF.

Positions 1–23 (MSGDHLHNDSQIEADFRLNDSHK) are enriched in basic and acidic residues. Residues 1-201 (MSGDHLHNDS…NKKKKPKKEE (201 aa)) form a disordered region. Ser-2 carries the post-translational modification N-acetylserine. Phosphoserine occurs at positions 2 and 10. Basic residues predominate over residues 24–39 (HKDKHKDREHRHKEHK). A compositionally biased stretch (basic and acidic residues) spans 40–110 (KDKEKDREKS…DAKIKKEKEN (71 aa)). Ser-59 is modified (phosphoserine). Lys-103 participates in a covalent cross-link: Glycyl lysine isopeptide (Lys-Gly) (interchain with G-Cter in SUMO2). Lys-105 is covalently cross-linked (Glycyl lysine isopeptide (Lys-Gly) (interchain with G-Cter in SUMO); alternate). Lys-105 participates in a covalent cross-link: Glycyl lysine isopeptide (Lys-Gly) (interchain with G-Cter in SUMO2); alternate. Ser-114 carries the phosphoserine modification. A Glycyl lysine isopeptide (Lys-Gly) (interchain with G-Cter in SUMO); alternate cross-link involves residue Lys-119. Lys-119 is covalently cross-linked (Glycyl lysine isopeptide (Lys-Gly) (interchain with G-Cter in SUMO2); alternate). A Glycyl lysine isopeptide (Lys-Gly) (interchain with G-Cter in SUMO1); alternate cross-link involves residue Lys-119. A compositionally biased stretch (basic and acidic residues) spans 131 to 168 (PKEDIKPLKRPRDEDDADYKPKKIKTEDIKKEKKRKLE). Residues Lys-136 and Lys-150 each participate in a glycyl lysine isopeptide (Lys-Gly) (interchain with G-Cter in SUMO2) cross-link. Residue Lys-155 forms a Glycyl lysine isopeptide (Lys-Gly) (interchain with G-Cter in SUMO); alternate linkage. A Glycyl lysine isopeptide (Lys-Gly) (interchain with G-Cter in SUMO2); alternate cross-link involves residue Lys-155. Residues Lys-160 and Lys-166 each participate in a glycyl lysine isopeptide (Lys-Gly) (interchain with G-Cter in SUMO2) cross-link. Lys-174 participates in a covalent cross-link: Glycyl lysine isopeptide (Lys-Gly) (interchain with G-Cter in SUMO2); alternate. Lys-174 is subject to N6-acetyllysine; alternate. Over residues 181–201 (KDKDKKVPEPDNKKKKPKKEE) the composition is skewed to basic and acidic residues. A Glycyl lysine isopeptide (Lys-Gly) (interchain with G-Cter in SUMO2) cross-link involves residue Lys-206. Residue Lys-282 is modified to N6-acetyllysine. Lys-338 is covalently cross-linked (Glycyl lysine isopeptide (Lys-Gly) (interchain with G-Cter in SUMO2)). Interaction with DNA regions lie at residues 427 to 428 (KY) and 490 to 495 (RAGNEK). The Topo IB-type catalytic domain occupies 434-767 (SSRIKGEKDW…IDMADEDYEF (334 aa)). Phosphoserine; by CK2 is present on Ser-508. Lys-551 is covalently cross-linked (Glycyl lysine isopeptide (Lys-Gly) (interchain with G-Cter in SUMO2)). The interval 587–589 (TAK) is interaction with DNA. Glycyl lysine isopeptide (Lys-Gly) (interchain with G-Cter in SUMO2) cross-links involve residues Lys-644, Lys-702, and Lys-714. The O-(3'-phospho-DNA)-tyrosine intermediate role is filled by Tyr-725.

This sequence belongs to the type IB topoisomerase family. As to quaternary structure, monomer. Interacts with ERCC6. Interacts with TPRN; TPRN interacts with a number of DNA damage response proteins, is recruited to sites of DNA damage and may play a role in DNA damage repair. In terms of processing, sumoylated. Lys-119 is the main site of sumoylation. Sumoylation plays a role in partitioning TOP1 between nucleoli and nucleoplasm. Levels are dramatically increased on camptothecin (CPT) treatment. Post-translationally, phosphorylation at Ser-508 by CK2 increases binding to supercoiled DNA and sensitivity to camptothecin.

Its subcellular location is the nucleus. The protein resides in the nucleolus. The protein localises to the nucleoplasm. The enzyme catalyses ATP-independent breakage of single-stranded DNA, followed by passage and rejoining.. Specifically inhibited by camptothecin (CPT), a plant alkaloid with antitumor activity. In terms of biological role, releases the supercoiling and torsional tension of DNA introduced during the DNA replication and transcription by transiently cleaving and rejoining one strand of the DNA duplex. Introduces a single-strand break via transesterification at a target site in duplex DNA. The scissile phosphodiester is attacked by the catalytic tyrosine of the enzyme, resulting in the formation of a DNA-(3'-phosphotyrosyl)-enzyme intermediate and the expulsion of a 5'-OH DNA strand. The free DNA strand then rotates around the intact phosphodiester bond on the opposing strand, thus removing DNA supercoils. Finally, in the religation step, the DNA 5'-OH attacks the covalent intermediate to expel the active-site tyrosine and restore the DNA phosphodiester backbone. Regulates the alternative splicing of tissue factor (F3) pre-mRNA in endothelial cells. Involved in the circadian transcription of the core circadian clock component BMAL1 by altering the chromatin structure around the ROR response elements (ROREs) on the BMAL1 promoter. This Chlorocebus aethiops (Green monkey) protein is DNA topoisomerase 1 (TOP1).